Reading from the N-terminus, the 81-residue chain is Small ribosomal subunit protein bS16 (81 aa).

The protein belongs to the bacterial ribosomal protein bS16 family.

The protein is Small ribosomal subunit protein bS16 of Clostridium botulinum (strain Eklund 17B / Type B).